A 433-amino-acid chain; its full sequence is Inositol hexakisphosphate kinase 1 (433 aa).

Residues 100 to 160 (ETVEQDDTPE…SPKVELHSHS (61 aa)) form a disordered region. A compositionally biased stretch (basic residues) spans 113–123 (PRRKHSRRSLH). A compositionally biased stretch (polar residues) spans 139 to 149 (SFETSESSQEA). Positions 150–160 (KSPKVELHSHS) are enriched in basic and acidic residues. At Ser151 the chain carries Phosphoserine. Substrate is bound at residue 220 to 228 (PCVLDLKMG). A disordered region spans residues 359–383 (EVPPPCGPSTSPSSTSLEAGPSSPP).

Belongs to the inositol phosphokinase (IPK) family. Highly expressed in brain and testis. Detected at much lower levels in heart, kidney, liver, lung and spleen.

Its subcellular location is the cytoplasm. It is found in the nucleus. It carries out the reaction 1D-myo-inositol hexakisphosphate + ATP = 5-diphospho-1D-myo-inositol 1,2,3,4,6-pentakisphosphate + ADP. The catalysed reaction is 1-diphospho-1D-myo-inositol 2,3,4,5,6-pentakisphosphate + ATP + H(+) = 1,5-bis(diphospho)-1D-myo-inositol 2,3,4,6-tetrakisphosphate + ADP. Its function is as follows. Converts inositol hexakisphosphate (InsP6) to diphosphoinositol pentakisphosphate (InsP7/PP-InsP5). Converts 1,3,4,5,6-pentakisphosphate (InsP5) to PP-InsP4. The chain is Inositol hexakisphosphate kinase 1 (Ip6k1) from Mus musculus (Mouse).